The sequence spans 94 residues: UPF0213 protein BH0048 (94 aa).

Positions 1–76 (MNHYVYILEC…KHLSRRKKEQ (76 aa)) constitute a GIY-YIG domain.

Belongs to the UPF0213 family.

The sequence is that of UPF0213 protein BH0048 from Halalkalibacterium halodurans (strain ATCC BAA-125 / DSM 18197 / FERM 7344 / JCM 9153 / C-125) (Bacillus halodurans).